A 486-amino-acid polypeptide reads, in one-letter code: Zinc finger CCCH domain-containing protein 49 (486 aa).

A C3H1-type zinc finger spans residues 157 to 184 (RNRAHVCSFYVRGECTRGAECPYRHEMP). An RRM domain is found at 228–301 (RTLYIGGLDS…VRLKLMWGKP (74 aa)). 2 disordered regions span residues 329–348 (SQQQ…QQQP) and 379–486 (LVES…NGMT). Composition is skewed to low complexity over residues 389–407 (PGPQ…GQSY) and 415–430 (YHGG…YGGY). The span at 431 to 444 (MPPPRMPYQQPPQY) shows a compositional bias: pro residues. The segment covering 445–486 (PAYQPMLAPPAQSQASSLQQPAPATQQLGQGPQQQTTQNGMT) has biased composition (low complexity).

In Oryza sativa subsp. japonica (Rice), this protein is Zinc finger CCCH domain-containing protein 49.